The primary structure comprises 119 residues: Immunoglobulin lambda variable 4-69 (119 aa).

Positions 1-20 (MAWTPLLFLTLLLHCTGSLS) are cleaved as a signal peptide. Residues 21–45 (QLVLTQSPSASASLGASVKLTCTLS) form a framework-1 region. Positions 21–119 (QLVLTQSPSA…YYCQTWGTGI (99 aa)) constitute an Ig-like domain. A disulfide bond links C42 and C112. Residues 46–52 (SGHSSYA) form a complementarity-determining-1 region. A framework-2 region spans residues 53 to 69 (IAWHQQQPEKGPRYLMK). The segment at 70-76 (LNSDGSH) is complementarity-determining-2. Residues 73-92 (DGSHSKGDGIPDRFSGSSSG) are disordered. Residues 77–112 (SKGDGIPDRFSGSSSGAERYLTISSLQSEDEADYYC) are framework-3. The segment at 113–119 (QTWGTGI) is complementarity-determining-3.

As to quaternary structure, immunoglobulins are composed of two identical heavy chains and two identical light chains; disulfide-linked.

The protein resides in the secreted. Its subcellular location is the cell membrane. In terms of biological role, v region of the variable domain of immunoglobulin light chains that participates in the antigen recognition. Immunoglobulins, also known as antibodies, are membrane-bound or secreted glycoproteins produced by B lymphocytes. In the recognition phase of humoral immunity, the membrane-bound immunoglobulins serve as receptors which, upon binding of a specific antigen, trigger the clonal expansion and differentiation of B lymphocytes into immunoglobulins-secreting plasma cells. Secreted immunoglobulins mediate the effector phase of humoral immunity, which results in the elimination of bound antigens. The antigen binding site is formed by the variable domain of one heavy chain, together with that of its associated light chain. Thus, each immunoglobulin has two antigen binding sites with remarkable affinity for a particular antigen. The variable domains are assembled by a process called V-(D)-J rearrangement and can then be subjected to somatic hypermutations which, after exposure to antigen and selection, allow affinity maturation for a particular antigen. In Homo sapiens (Human), this protein is Immunoglobulin lambda variable 4-69.